The following is a 353-amino-acid chain: Photosystem II D2 protein (353 aa).

T2 carries the N-acetylthreonine modification. Residue T2 is modified to Phosphothreonine. Residues 41 to 61 (CAYFALGGWFTGTTFVTSWYT) form a helical membrane-spanning segment. H118 lines the chlorophyll a pocket. Residues 125–141 (GFMLRQFEIARSVQLRP) traverse the membrane as a helical segment. Pheophytin a contacts are provided by Q130 and N143. The chain crosses the membrane as a helical span at residues 153-166 (VFVSVFLIYPLGQS). H198 contributes to the chlorophyll a binding site. The chain crosses the membrane as a helical span at residues 208 to 228 (AALLCAIHGATVENTLFEDGD). Residues H215 and F262 each contribute to the a plastoquinone site. Fe cation is bound at residue H215. Position 269 (H269) interacts with Fe cation. A helical membrane pass occupies residues 279 to 295 (GLWMSALGVVGLALNLR).

It belongs to the reaction center PufL/M/PsbA/D family. PSII is composed of 1 copy each of membrane proteins PsbA, PsbB, PsbC, PsbD, PsbE, PsbF, PsbH, PsbI, PsbJ, PsbK, PsbL, PsbM, PsbT, PsbX, PsbY, PsbZ, Psb30/Ycf12, at least 3 peripheral proteins of the oxygen-evolving complex and a large number of cofactors. It forms dimeric complexes. The cofactor is The D1/D2 heterodimer binds P680, chlorophylls that are the primary electron donor of PSII, and subsequent electron acceptors. It shares a non-heme iron and each subunit binds pheophytin, quinone, additional chlorophylls, carotenoids and lipids. There is also a Cl(-1) ion associated with D1 and D2, which is required for oxygen evolution. The PSII complex binds additional chlorophylls, carotenoids and specific lipids..

Its subcellular location is the plastid. The protein localises to the chloroplast thylakoid membrane. The enzyme catalyses 2 a plastoquinone + 4 hnu + 2 H2O = 2 a plastoquinol + O2. Its function is as follows. Photosystem II (PSII) is a light-driven water:plastoquinone oxidoreductase that uses light energy to abstract electrons from H(2)O, generating O(2) and a proton gradient subsequently used for ATP formation. It consists of a core antenna complex that captures photons, and an electron transfer chain that converts photonic excitation into a charge separation. The D1/D2 (PsbA/PsbD) reaction center heterodimer binds P680, the primary electron donor of PSII as well as several subsequent electron acceptors. D2 is needed for assembly of a stable PSII complex. This Oenothera argillicola (Appalachian evening primrose) protein is Photosystem II D2 protein.